A 523-amino-acid chain; its full sequence is Peptide chain release factor 3 (523 aa).

The tr-type G domain maps to 10–277 (KKRRTFAIIS…SFVDLAPAPE (268 aa)). GTP contacts are provided by residues 19-26 (SHPDAGKT), 87-91 (DTPGH), and 141-144 (NKLD).

Belongs to the TRAFAC class translation factor GTPase superfamily. Classic translation factor GTPase family. PrfC subfamily.

The protein resides in the cytoplasm. Increases the formation of ribosomal termination complexes and stimulates activities of RF-1 and RF-2. It binds guanine nucleotides and has strong preference for UGA stop codons. It may interact directly with the ribosome. The stimulation of RF-1 and RF-2 is significantly reduced by GTP and GDP, but not by GMP. This is Peptide chain release factor 3 from Lactobacillus helveticus (strain DPC 4571).